Reading from the N-terminus, the 369-residue chain is Glutamate 5-kinase (369 aa).

Lys10 contributes to the ATP binding site. Ser50, Asp137, and Asn149 together coordinate substrate. ATP is bound by residues 169-170 (TD) and 210-216 (TGGMVTK). A PUA domain is found at 276 to 349 (EGSIFIDEGA…GKHSEEMLAT (74 aa)).

It belongs to the glutamate 5-kinase family.

Its subcellular location is the cytoplasm. It catalyses the reaction L-glutamate + ATP = L-glutamyl 5-phosphate + ADP. It functions in the pathway amino-acid biosynthesis; L-proline biosynthesis; L-glutamate 5-semialdehyde from L-glutamate: step 1/2. In terms of biological role, catalyzes the transfer of a phosphate group to glutamate to form L-glutamate 5-phosphate. The chain is Glutamate 5-kinase from Desulfitobacterium hafniense (strain Y51).